We begin with the raw amino-acid sequence, 154 residues long: TSET complex member tstD (154 aa).

It belongs to the adaptor complexes small subunit family. As to quaternary structure, component of the TSET complex, a heterohexamer composed of tstA, tstB, tstC, tstD, tstE and tstF, which may act in plasma membrane turnover. tstA, tstB, tstC and tstD are likely to be the core complex members with tstE and tstF acting as associated scaffold proteins.

The protein resides in the cell membrane. It is found in the cytoplasm. This chain is TSET complex member tstD, found in Dictyostelium discoideum (Social amoeba).